The sequence spans 240 residues: Enoyl-CoA delta isomerase 2, peroxisomal (240 aa).

The short motif at 238–240 is the Microbody targeting signal element; sequence PKL.

Belongs to the enoyl-CoA hydratase/isomerase family.

It localises to the peroxisome. It carries out the reaction a (3Z)-enoyl-CoA = a 4-saturated (2E)-enoyl-CoA. It catalyses the reaction a (3E)-enoyl-CoA = a 4-saturated (2E)-enoyl-CoA. Its pathway is lipid metabolism; fatty acid beta-oxidation. Able to isomerize both 3-cis and 3-trans double bonds into the 2-trans form in a range of enoyl-CoA species. Essential for the beta oxidation of unsaturated fatty acids. Involved with IBR1 and IBR3 in the peroxisomal beta-oxidation of indole-3-butyric acid (IBA) to form indole-3-acetic acid (IAA), a biologically active auxin. The polypeptide is Enoyl-CoA delta isomerase 2, peroxisomal (Arabidopsis thaliana (Mouse-ear cress)).